We begin with the raw amino-acid sequence, 321 residues long: Transaldolase (321 aa).

The active-site Schiff-base intermediate with substrate is lysine 132.

The protein belongs to the transaldolase family. Type 1 subfamily. In terms of assembly, homodimer.

It localises to the cytoplasm. It catalyses the reaction D-sedoheptulose 7-phosphate + D-glyceraldehyde 3-phosphate = D-erythrose 4-phosphate + beta-D-fructose 6-phosphate. The protein operates within carbohydrate degradation; pentose phosphate pathway; D-glyceraldehyde 3-phosphate and beta-D-fructose 6-phosphate from D-ribose 5-phosphate and D-xylulose 5-phosphate (non-oxidative stage): step 2/3. Its function is as follows. Transaldolase is important for the balance of metabolites in the pentose-phosphate pathway. The chain is Transaldolase from Rhizobium etli (strain CIAT 652).